A 327-amino-acid chain; its full sequence is Immunodominant envelope protein p35 (327 aa).

Positions Lys-41 to Val-69 are disordered. Residues Ser-59–Val-69 show a composition bias toward basic and acidic residues. A helical transmembrane segment spans residues Ile-291 to Asn-311.

This sequence belongs to the poxviruses protein p35 family.

It localises to the virion membrane. Envelope protein that binds to the cell surface to provide virion attachment to target cell. The polypeptide is Immunodominant envelope protein p35 (Fowlpox virus (strain NVSL) (FPV)).